A 1121-amino-acid chain; its full sequence is Phosphatidylinositol 4-kinase beta 1 (1121 aa).

The region spanning 1 to 143 is the PIK helical domain; it reads MPMGRFLSLV…SRIQEKCQIA (143 aa). Polar residues predominate over residues 187 to 207; it reads PPTQKSLSFSPSPGTNVQDDG. The segment at 187-210 is disordered; sequence PPTQKSLSFSPSPGTNVQDDGSQL. Repeat copies occupy residues 212–231, 244–263, 266–285, 288–306, 309–328, 331–350, 353–372, 380–398, and 420–438. The 11 X 20 AA approximate repeats (PPC) stretch occupies residues 212–508; that stretch reads AEDNKIFKKL…FRDRDQSVED (297 aa). Disordered regions lie at residues 343–421, 435–489, 506–544, and 794–825; these read ESKN…EEDE, DDKK…ESSP, VEDS…NTAS, and AAAA…NGGM. Composition is skewed to basic and acidic residues over residues 358-376, 383-405, 412-421, and 435-445; these read FFKK…VPKE, DGFL…EKNE, ADKKSGEEDE, and DDKKDIVKVDD. A compositionally biased stretch (acidic residues) spans 446–455; it reads GNESEGDESP. Serine 449 and serine 454 each carry phosphoserine. 2 tandem repeats follow at residues 454–472 and 489–508. Positions 466-475 are enriched in basic and acidic residues; the sequence is IHPEDAKPTS. A compositionally biased stretch (polar residues) spans 476–489; it reads ENENSSNGLVESSP. The PI3K/PI4K catalytic domain occupies 835–1106; it reads ELWEGKRDRI…LISSSLDAWR (272 aa). The G-loop stretch occupies residues 841-847; sequence RDRIRKA. The interval 969–977 is catalytic loop; sequence QVKDRHNGN. The segment at 988–1012 is activation loop; that stretch reads HIDFGFMLSNSPGGVNFESAPFKLT.

It belongs to the PI3/PI4-kinase family. Type III PI4K subfamily. As to quaternary structure, interacts with AHK2, CBL1 and RABA4D. Expressed constitutively in leaves, roots, flowers, and stems.

Its subcellular location is the cell membrane. The protein resides in the golgi apparatus. It localises to the trans-Golgi network. The protein localises to the cytoplasmic vesicle membrane. The catalysed reaction is a 1,2-diacyl-sn-glycero-3-phospho-(1D-myo-inositol) + ATP = a 1,2-diacyl-sn-glycero-3-phospho-(1D-myo-inositol 4-phosphate) + ADP + H(+). With respect to regulation, stimulated by phosphatidylinositol 4-phosphate (PtdIns4P). Slightly repressed by phosphatidyl-choline (PtdCho), wortmannin and adenosine. Its function is as follows. Acts on phosphatidylinositol (PtdIns) in the first committed step in the production of the second messenger inositol-1,4,5-trisphosphate. Necessary for proper organization of the trans-Golgi network (TGN) and post-Golgi secretion in root hairs. Together with PI4KB2, required during polarized root hair expansion and pollen tube elongation. Functions redundantly with PI4KB2 upstream of the cold response phosphoinositide-dependent phospholipase C (PI-PLC) pathway. The chain is Phosphatidylinositol 4-kinase beta 1 from Arabidopsis thaliana (Mouse-ear cress).